We begin with the raw amino-acid sequence, 684 residues long: Protein ecdysoneless (684 aa).

The segment covering 491-501 (EPELDSDDDEP) has biased composition (acidic residues). Disordered regions lie at residues 491 to 528 (EPELDSDDDEPPPQANGSTGLTAKVKKNPSMRKACQRN) and 603 to 624 (TSVGKSFHGKKKTAPQADEDDF).

It belongs to the ECD family. Expressed in the ecdysone-producing larval ring gland, nervous system, imaginal disks and gonads.

The protein resides in the cytoplasm. Functionally, required in both the follicle cells and the germline for oocyte development. This chain is Protein ecdysoneless, found in Drosophila melanogaster (Fruit fly).